Reading from the N-terminus, the 214-residue chain is MRIVLLGAPGAGKGTQAQFIMEKHGIPQISTGDMLRAAIKAGTELGLKAKAVMDAGQLVSDDIIIGLVKERIAQPDCANGFLLDGFPRTIPQAQAMKDAGVAVDFVLEFDVPDEEIVKRMSGRRVHSGSGRTYHVVFNPPKVEGKDDVTGEDLVIRADDEETTVRKRLDVYHQQTAPLIGFYGKEAEAGNTRYVKIDGTQPVDLVSKQLATILG.

10 to 15 is a binding site for ATP; the sequence is GAGKGT. The segment at 30 to 59 is NMP; sequence STGDMLRAAIKAGTELGLKAKAVMDAGQLV. Residues Thr31, Arg36, 57 to 59, 85 to 88, and Gln92 contribute to the AMP site; these read QLV and GFPR. The LID stretch occupies residues 122-159; that stretch reads GRRVHSGSGRTYHVVFNPPKVEGKDDVTGEDLVIRADD. ATP contacts are provided by residues Arg123 and 132–133; that span reads TY. AMP contacts are provided by Arg156 and Arg167. Residue Gln200 coordinates ATP.

This sequence belongs to the adenylate kinase family. In terms of assembly, monomer.

The protein localises to the cytoplasm. The catalysed reaction is AMP + ATP = 2 ADP. The protein operates within purine metabolism; AMP biosynthesis via salvage pathway; AMP from ADP: step 1/1. Catalyzes the reversible transfer of the terminal phosphate group between ATP and AMP. Plays an important role in cellular energy homeostasis and in adenine nucleotide metabolism. This is Adenylate kinase from Aeromonas hydrophila subsp. hydrophila (strain ATCC 7966 / DSM 30187 / BCRC 13018 / CCUG 14551 / JCM 1027 / KCTC 2358 / NCIMB 9240 / NCTC 8049).